Here is a 409-residue protein sequence, read N- to C-terminus: Glycosaminoglycan xylosylkinase (409 aa).

Topologically, residues 1 to 6 are cytoplasmic; it reads MKLKQR. The chain crosses the membrane as a helical; Signal-anchor for type II membrane protein span at residues 7–25; sequence VVVLCAVLFLLGLAKVFLL. The Lumenal segment spans residues 26-409; it reads DGGEGSAASR…IEDRMNLPHP (384 aa). ATP contacts are provided by Q107 and K123. A Mn(2+)-binding site is contributed by D142. N-linked (GlcNAc...) asparagine glycosylation occurs at N193. 2 cysteine pairs are disulfide-bonded: C196-C211 and C201-C204. 222–225 contacts ATP; sequence TLWL. 2 cysteine pairs are disulfide-bonded: C257–C331 and C332–C389. D289 is an active-site residue. ATP contacts are provided by E294 and D309. D309 contributes to the Mn(2+) binding site.

This sequence belongs to the FAM20 family. The cofactor is Mn(2+).

The protein localises to the golgi apparatus membrane. It catalyses the reaction 3-O-(beta-D-galactosyl-(1-&gt;3)-beta-D-galactosyl-(1-&gt;4)-beta-D-xylosyl)-L-seryl-[protein] + ATP = 3-O-(beta-D-galactosyl-(1-&gt;3)-beta-D-galactosyl-(1-&gt;4)-beta-D-2-O-phosphoxylosyl)-L-seryl-[protein] + ADP + H(+). In terms of biological role, responsible for the 2-O-phosphorylation of xylose in the glycosaminoglycan-protein linkage region of proteoglycans thereby regulating the amount of mature GAG chains. Sulfated glycosaminoglycans (GAGs), including heparan sulfate and chondroitin sulfate, are synthesized on the so-called common GAG-protein linkage region (GlcUAbeta1-3Galbeta1-3Galbeta1-4Xylbeta1-O-Ser) of core proteins, which is formed by the stepwise addition of monosaccharide residues by the respective specific glycosyltransferases. This Danio rerio (Zebrafish) protein is Glycosaminoglycan xylosylkinase.